The sequence spans 106 residues: uncharacterized protein (106 aa).

This is an uncharacterized protein from Escherichia coli O6:H1 (strain CFT073 / ATCC 700928 / UPEC).